Here is a 291-residue protein sequence, read N- to C-terminus: uncharacterized protein (291 aa).

Disordered stretches follow at residues 29-50 (SEKP…LRDS) and 168-291 (RKVK…AELK). Position 50 is a phosphoserine (serine 50). 2 stretches are compositionally biased toward polar residues: residues 176–186 (NSKNPSKTGTP) and 205–217 (QKNS…SKLI). Over residues 221–237 (YKDEWLQQQKAEADRRT) the composition is skewed to basic and acidic residues. Residues 280–291 (SSPSESTPAELK) show a composition bias toward polar residues.

This is an uncharacterized protein from Mus musculus (Mouse).